Here is an 802-residue protein sequence, read N- to C-terminus: Putative transcriptional regulator cudA (802 aa).

4 disordered regions span residues 1–148 (MNQS…PSAI), 154–173 (ISNN…NLLL), 381–446 (NNIN…NNEN), and 636–658 (QPQQ…QQGQ). Positions 25 to 63 (NNNNNGNNGMMMNQQQMQQHVVPHLHHLQQQQQQPQQQQ) are enriched in low complexity. Residues 69-88 (DYSNSPNGTTNGSTMSPNCI) show a composition bias toward polar residues. Low complexity predominate over residues 89–128 (NTNNNNNNNNNNNNNSNNNNNNNNNASNNLTSNKSSSTNT). A compositionally biased stretch (polar residues) spans 129–142 (PQIGQLQASPANLT). Positions 381 to 445 (NNINNNNNIN…CNNNNNNNNE (65 aa)) are enriched in low complexity.

In terms of tissue distribution, expressed in the prestalk cells that constitute the slug tip (pstA cells) and in prespore cells (at protein level). Not expressed in the band of prestalk cells that lies behind the slug tip (pstO cells). Highly expressed in pstO derived papilla cells during culmination.

The protein localises to the nucleus. Its subcellular location is the nucleoplasm. In terms of biological role, essential for normal culmination. May function as a transcriptional regulator. The polypeptide is Putative transcriptional regulator cudA (cudA) (Dictyostelium discoideum (Social amoeba)).